The following is a 369-amino-acid chain: Anhydro-N-acetylmuramic acid kinase (369 aa).

12 to 19 (GTSLDGVD) contacts ATP.

It belongs to the anhydro-N-acetylmuramic acid kinase family.

It catalyses the reaction 1,6-anhydro-N-acetyl-beta-muramate + ATP + H2O = N-acetyl-D-muramate 6-phosphate + ADP + H(+). The protein operates within amino-sugar metabolism; 1,6-anhydro-N-acetylmuramate degradation. Its pathway is cell wall biogenesis; peptidoglycan recycling. Its function is as follows. Catalyzes the specific phosphorylation of 1,6-anhydro-N-acetylmuramic acid (anhMurNAc) with the simultaneous cleavage of the 1,6-anhydro ring, generating MurNAc-6-P. Is required for the utilization of anhMurNAc either imported from the medium or derived from its own cell wall murein, and thus plays a role in cell wall recycling. This chain is Anhydro-N-acetylmuramic acid kinase, found in Escherichia coli O45:K1 (strain S88 / ExPEC).